Reading from the N-terminus, the 314-residue chain is PDCD10 and GCKIII kinases-associated protein 1 (314 aa).

Position 30 is a phosphoserine (Ser-30). The disordered stretch occupies residues 36-142; sequence DDTDKLKGKW…TQPFLEGGGT (107 aa). Thr-106 carries the post-translational modification Phosphothreonine. Positions 107–116 are enriched in polar residues; that stretch reads PQPTGNSSPT. Ser-238 and Ser-241 each carry phosphoserine. Positions 267 to 291 are disordered; the sequence is VDSGNRQEDTHGSDGDGDGEIVDED. Basic and acidic residues predominate over residues 271–280; it reads NRQEDTHGSD. Residues 281–291 show a composition bias toward acidic residues; it reads GDGDGEIVDED.

As to quaternary structure, interacts with KEAP1; this interaction prevents the ubiquitination of KEAP1 by TRIM25, thus protecting KEAP1 from degradation. Found in association with PDCD10 and members of the STE20 kinases, such as STK24, STK25 and STK26.

It localises to the cell membrane. In terms of biological role, acts as a tumor suppressor. Acts as a tumor suppressor for colorectal cancer cell proliferation by targeting KEAP1/USP17/ELK1/CDK6 axis. The protein is PDCD10 and GCKIII kinases-associated protein 1 of Homo sapiens (Human).